The following is a 150-amino-acid chain: uncharacterized protein (150 aa).

This sequence belongs to the IIV-6 391R family.

This is an uncharacterized protein from Invertebrate iridescent virus 3 (IIV-3).